Consider the following 474-residue polypeptide: Gasdermin-C (474 aa).

The interval 1-237 is triggers pyroptosis; it reads MLYTFDQVSK…TCAILLSANA (237 aa).

It belongs to the gasdermin family. Homooligomer; homooligomeric ring-shaped pore complex containing 27-28 subunits when inserted in the membrane. Post-translationally, cleavage by CASP8 relieves autoinhibition by releasing the N-terminal moiety (Gasdermin-C, N-terminal) that initiates pyroptosis. In terms of processing, palmitoylated.

It is found in the cytoplasm. The protein resides in the cytosol. The protein localises to the cell membrane. With respect to regulation, the full-length protein before cleavage is inactive: intramolecular interactions between N- and C-terminal domains mediate autoinhibition in the absence of activation signal. The intrinsic pyroptosis-inducing activity is carried by the released N-terminal moiety (Gasdermin-C, N-terminal) following cleavage by caspase CASP8. In terms of biological role, this form constitutes the precursor of the pore-forming protein: upon cleavage, the released N-terminal moiety (Gasdermin-C, N-terminal) binds to membranes and forms pores, triggering pyroptosis. Functionally, pore-forming protein that causes membrane permeabilization and pyroptosis. Produced by the cleavage of gasdermin-C by caspase CASP8 in response to death signals. After cleavage, moves to the plasma membrane where it strongly binds to membrane inner leaflet lipids. Homooligomerizes within the membrane and forms pores of 10-15 nanometers (nm) of inner diameter, triggering pyroptosis. This Rattus norvegicus (Rat) protein is Gasdermin-C.